We begin with the raw amino-acid sequence, 267 residues long: Small ribosomal subunit protein uS2 (267 aa).

Residues 224 to 244 (GRQGEDEDVTEDSFKDNKDAK) are disordered. The segment covering 235–244 (DSFKDNKDAK) has biased composition (basic and acidic residues).

This sequence belongs to the universal ribosomal protein uS2 family.

The polypeptide is Small ribosomal subunit protein uS2 (Lactiplantibacillus plantarum (strain ATCC BAA-793 / NCIMB 8826 / WCFS1) (Lactobacillus plantarum)).